The chain runs to 346 residues: MIKISIDAMGGDFGPEVVIPGAAKAFERHPDIRFIFFGLPAQVEPVLARYPKLKEASEFRASEVAIGMDDKPSQALRAGRGKSSMWQAIEAVKTGDADACVSAGNTGALMAMSKFCLRMMSDVERPAIAGIWPTLRGESIVLDIGATIGADARQLVDYAVMGAGMARALFEVRKPTVGLLNVGTEEVKGLDEIKEAGQILCDTPLDGLEYSGFVEGNDIGKGTVDVVVTEGFTGNIALKTAEGTARQMAELLRQAMSRTLLAKIGHVFAKGAFDRLREKMDPNKVNGGVFLGLSGIVIKSHGGANAEGFCSAVEVGYDMVRNRLLEKIEADLAHFHHSHSHVSSKA.

This sequence belongs to the PlsX family. In terms of assembly, homodimer. Probably interacts with PlsY.

The protein localises to the cytoplasm. It catalyses the reaction a fatty acyl-[ACP] + phosphate = an acyl phosphate + holo-[ACP]. The protein operates within lipid metabolism; phospholipid metabolism. In terms of biological role, catalyzes the reversible formation of acyl-phosphate (acyl-PO(4)) from acyl-[acyl-carrier-protein] (acyl-ACP). This enzyme utilizes acyl-ACP as fatty acyl donor, but not acyl-CoA. In Brucella ovis (strain ATCC 25840 / 63/290 / NCTC 10512), this protein is Phosphate acyltransferase.